Here is a 237-residue protein sequence, read N- to C-terminus: Class B acid phosphatase (237 aa).

The N-terminal stretch at 1 to 25 (MRKVSLALSAACLLFTLNYTASALA) is a signal peptide. D69 serves as the catalytic Nucleophile. Residues D69 and D71 each coordinate Mg(2+). The active-site Proton donor is the D71. Substrate is bound by residues 137 to 138 (TG) and K177. A Mg(2+)-binding site is contributed by D192.

The protein belongs to the class B bacterial acid phosphatase family. In terms of assembly, homotetramer. Requires Mg(2+) as cofactor.

The protein resides in the periplasm. The catalysed reaction is a phosphate monoester + H2O = an alcohol + phosphate. Functionally, dephosphorylates several organic phosphate monoesters. Also has a phosphotransferase activity catalyzing the transfer of low-energy phosphate groups from organic phosphate monoesters to free hydroxyl groups of various organic compounds. The sequence is that of Class B acid phosphatase from Citrobacter rodentium (strain ICC168) (Citrobacter freundii biotype 4280).